The chain runs to 346 residues: Annexin A1 (346 aa).

Alanine 2 carries the N-acetylalanine modification. Serine 5 is modified (phosphoserine; by TRPM7). An Isoglutamyl lysine isopeptide (Gln-Lys) (interchain with K-?) cross-link involves residue glutamine 19. A Phosphotyrosine; by EGFR modification is found at tyrosine 21. The disordered stretch occupies residues 25–47 (VKGSKGGPGSAVSPYPTFNPSSD). 2 positions are modified to phosphoserine: serine 34 and serine 37. Threonine 41 carries the post-translational modification Phosphothreonine. 4 Annexin repeats span residues 42–113 (FNPS…ALLK), 114–185 (TPAQ…SLAK), 197–269 (DLAD…VVVK), and 273–344 (SKPM…ALCG). Lysine 58 is modified (N6-acetyllysine). Ca(2+) is bound by residues glycine 59, valine 60, glutamate 62, lysine 97, leucine 100, glutamate 105, methionine 127, glycine 129, glycine 131, threonine 132, and glutamate 134. Phosphothreonine is present on threonine 136. Ca(2+) contacts are provided by aspartate 171, glycine 210, and arginine 213. Lysine 214 is covalently cross-linked (Glycyl lysine isopeptide (Lys-Gly) (interchain with G-Cter in SUMO1); alternate). Lysine 214 participates in a covalent cross-link: Glycyl lysine isopeptide (Lys-Gly) (interchain with G-Cter in SUMO2); alternate. Glycine 215 contributes to the Ca(2+) binding site. At lysine 239 the chain carries N6-acetyllysine. Aspartate 253, glutamate 255, and leucine 256 together coordinate Ca(2+). Lysine 257 participates in a covalent cross-link: Glycyl lysine isopeptide (Lys-Gly) (interchain with G-Cter in SUMO1). Residues glutamate 261, methionine 286, glycine 288, and glycine 290 each coordinate Ca(2+). Lysine 312 carries the N6-acetyllysine modification. Cysteine 324 and cysteine 343 are oxidised to a cystine. 3 residues coordinate Ca(2+): leucine 328, glutamate 330, and threonine 331. Lysine 332 participates in a covalent cross-link: Glycyl lysine isopeptide (Lys-Gly) (interchain with G-Cter in SUMO1). Glutamate 336 is a binding site for Ca(2+).

Belongs to the annexin family. Homodimer; non-covalently linked. Homodimer; linked by transglutamylation. Homodimers linked by transglutamylation are observed in placenta, but not in other tissues. Interacts with S100A11. Heterotetramer, formed by two molecules each of S100A11 and ANXA1. Interacts with DYSF. Interacts with EGFR. In terms of processing, phosphorylated by EGFR. Phosphorylated by protein kinase C and TRPM7. Phosphorylated in response to EGF treatment. Sumoylated. Post-translationally, proteolytically cleaved by cathepsin CTSG to release the active N-terminal peptide Ac2-26. In terms of tissue distribution, detected in lung and spleen (at protein level).

Its subcellular location is the nucleus. It localises to the cytoplasm. The protein resides in the cell projection. It is found in the cilium. The protein localises to the basolateral cell membrane. Its subcellular location is the lateral cell membrane. It localises to the early endosome. The protein resides in the cell membrane. It is found in the cytoplasmic vesicle membrane. The protein localises to the apical cell membrane. Its subcellular location is the membrane. It localises to the endosome. The protein resides in the secreted. It is found in the extracellular space. The protein localises to the extracellular exosome. Its subcellular location is the cytoplasmic vesicle. It localises to the secretory vesicle lumen. The protein resides in the phagocytic cup. Functionally, plays important roles in the innate immune response as effector of glucocorticoid-mediated responses and regulator of the inflammatory process. Has anti-inflammatory activity. Plays a role in glucocorticoid-mediated down-regulation of the early phase of the inflammatory response. Contributes to the adaptive immune response by enhancing signaling cascades that are triggered by T-cell activation, regulates differentiation and proliferation of activated T-cells. Promotes the differentiation of T-cells into Th1 cells and negatively regulates differentiation into Th2 cells. Has no effect on unstimulated T-cells. Negatively regulates hormone exocytosis via activation of the formyl peptide receptors and reorganization of the actin cytoskeleton. Has high affinity for Ca(2+) and can bind up to eight Ca(2+) ions. Displays Ca(2+)-dependent binding to phospholipid membranes. Plays a role in the formation of phagocytic cups and phagosomes. Plays a role in phagocytosis by mediating the Ca(2+)-dependent interaction between phagosomes and the actin cytoskeleton. In terms of biological role, functions at least in part by activating the formyl peptide receptors and downstream signaling cascades. Promotes chemotaxis of granulocytes and monocytes via activation of the formyl peptide receptors. Promotes rearrangement of the actin cytoskeleton, cell polarization and cell migration. Promotes resolution of inflammation and wound healing. Acts via neutrophil N-formyl peptide receptors to enhance the release of CXCL2. This is Annexin A1 (ANXA1) from Sus scrofa (Pig).